A 406-amino-acid polypeptide reads, in one-letter code: Arginine deiminase (406 aa).

Catalysis depends on cysteine 396, which acts as the Amidino-cysteine intermediate.

This sequence belongs to the arginine deiminase family.

The protein resides in the cytoplasm. It catalyses the reaction L-arginine + H2O = L-citrulline + NH4(+). The protein operates within amino-acid degradation; L-arginine degradation via ADI pathway; carbamoyl phosphate from L-arginine: step 1/2. The protein is Arginine deiminase of Vibrio vulnificus (strain CMCP6).